Consider the following 507-residue polypeptide: ATP synthase subunit alpha, chloroplastic (507 aa).

170–177 (GDRQTGKT) lines the ATP pocket.

This sequence belongs to the ATPase alpha/beta chains family. In terms of assembly, F-type ATPases have 2 components, CF(1) - the catalytic core - and CF(0) - the membrane proton channel. CF(1) has five subunits: alpha(3), beta(3), gamma(1), delta(1), epsilon(1). CF(0) has four main subunits: a, b, b' and c.

Its subcellular location is the plastid. The protein localises to the chloroplast thylakoid membrane. The catalysed reaction is ATP + H2O + 4 H(+)(in) = ADP + phosphate + 5 H(+)(out). Its function is as follows. Produces ATP from ADP in the presence of a proton gradient across the membrane. The alpha chain is a regulatory subunit. This chain is ATP synthase subunit alpha, chloroplastic, found in Pelargonium hortorum (Common geranium).